Reading from the N-terminus, the 303-residue chain is N-acetyl-D-glucosamine kinase (303 aa).

Residues 4–11 and 133–140 contribute to the ATP site; these read GFDVGGTK and GFGGGLVF. Residues H157, C177, C179, and C184 each coordinate Zn(2+).

This sequence belongs to the ROK (NagC/XylR) family. NagK subfamily.

The catalysed reaction is N-acetyl-D-glucosamine + ATP = N-acetyl-D-glucosamine 6-phosphate + ADP + H(+). Its pathway is cell wall biogenesis; peptidoglycan recycling. Its function is as follows. Catalyzes the phosphorylation of N-acetyl-D-glucosamine (GlcNAc) derived from cell-wall degradation, yielding GlcNAc-6-P. The sequence is that of N-acetyl-D-glucosamine kinase from Photobacterium profundum (strain SS9).